The following is a 738-amino-acid chain: YTH domain-containing protein 1 (738 aa).

A compositionally biased stretch (basic and acidic residues) spans 1 to 12 (MAADSREEKDGE). Residues 1 to 341 (MAADSREEKD…KHEKLSSSVR (341 aa)) form a disordered region. Serine 35 carries the post-translational modification Phosphoserine. Residues 50–59 (ERMESIDTKR) show a composition bias toward basic and acidic residues. Residues 63–90 (SIHSRQLISKPLSSSVSNNKRIVSTKGK) are compositionally biased toward polar residues. A compositionally biased stretch (basic and acidic residues) spans 91-115 (SVTEYKNEEYQRSERNKRLDADRKI). Lysine 96 participates in a covalent cross-link: Glycyl lysine isopeptide (Lys-Gly) (interchain with G-Cter in SUMO2). Phosphoserine is present on residues serine 118 and serine 120. The segment covering 124–144 (EPYKSQPEKPCLRKRDSERRA) has biased composition (basic and acidic residues). Position 146 is a phosphoserine (serine 146). Threonine 148 carries the phosphothreonine modification. Basic and acidic residues-rich tracts occupy residues 151–163 (GSERIGLEVDRRA) and 170–185 (SKEEGNSEEYGSDHET). Polar residues predominate over residues 186 to 197 (GSSASSEQGNNT). The segment covering 198–257 (ENEEEGGEEDVEEDEEVDEDGDDDEEVDEDAEEEEDEEEDEEEEDEEEEEEEEEEYEQDE) has biased composition (acidic residues). The segment covering 258–273 (RDQKEEGNDYDTRSEA) has biased composition (basic and acidic residues). Polar residues predominate over residues 283–292 (FTDGSVRSGS). Phosphoserine is present on residues serine 311, serine 318, serine 320, serine 321, and serine 323. The span at 318–328 (SGSSASESYAG) shows a compositional bias: low complexity. Positions 358–495 (ARFFLIKSNN…ECGTQLCLLF (138 aa)) constitute a YTH domain. Residues 364–366 (KSN) and tryptophan 380 each bind RNA. Phosphoserine is present on serine 427. Tryptophan 431 contacts RNA. Serine 438 bears the Phosphoserine mark. Aspartate 479 is a binding site for RNA. A compositionally biased stretch (basic residues) spans 512–526 (HKRRMHSQPRSRGRP). 3 disordered regions span residues 512–566 (HKRR…RPGY), 618–654 (GMPPYPGIEQPPHHPYYQHHAPPPQAHPPYSGHHPVP), and 680–738 (AVVS…RYRR). Over residues 527–566 (SRREPVRDVGRRRPEDYDIHNSRKKPRIDYPPEFHQRPGY) the composition is skewed to basic and acidic residues. Position 548 is a phosphoserine (serine 548). The segment covering 690-738 (RERDRERERDRPRDNRRDRERDRGRDRERERERICDRDRDRGERGRYRR) has biased composition (basic and acidic residues).

In terms of assembly, interacts with SRSF1. Interacts with SRSF2. Interacts with SRSF3. Interacts with SRSF7. Interacts with SRSF10. Interacts with CPSF6. Interacts with KHDRBS1/SAM68. Interacts with TRA2B. Interacts with KHDRBS3. Interacts with EMD. Interacts with RBMX. Interacts with ZCCHC8. Post-translationally, tyrosine phosphorylated. In terms of tissue distribution, ubiquitous.

It is found in the nucleus. It localises to the nucleus speckle. In terms of biological role, regulator of alternative splicing that specifically recognizes and binds N6-methyladenosine (m6A)-containing RNAs. M6A is a modification present at internal sites of mRNAs and some non-coding RNAs and plays a role in the efficiency of mRNA splicing, processing and stability. Acts as a key regulator of exon-inclusion or exon-skipping during alternative splicing via interaction with mRNA splicing factors SRSF3 and SRSF10. Specifically binds m6A-containing mRNAs and promotes recruitment of SRSF3 to its mRNA-binding elements adjacent to m6A sites, leading to exon-inclusion during alternative splicing. In contrast, interaction with SRSF3 prevents interaction with SRSF10, a splicing factor that promotes exon skipping: this prevents SRSF10 from binding to its mRNA-binding sites close to m6A-containing regions, leading to inhibit exon skipping during alternative splicing. May also regulate alternative splice site selection. Also involved in nuclear export of m6A-containing mRNAs via interaction with SRSF3: interaction with SRSF3 facilitates m6A-containing mRNA-binding to both SRSF3 and NXF1, promoting mRNA nuclear export. Involved in S-adenosyl-L-methionine homeostasis by regulating expression of MAT2A transcripts, probably by binding m6A-containing MAT2A mRNAs. Also recognizes and binds m6A on other RNA molecules. Involved in random X inactivation mediated by Xist RNA: recognizes and binds m6A-containing Xist and promotes transcription repression activity of Xist. Also recognizes and binds m6A-containing single-stranded DNA. Involved in germline development: required for spermatogonial development in males and oocyte growth and maturation in females, probably via its role in alternative splicing. The chain is YTH domain-containing protein 1 (Ythdc1) from Rattus norvegicus (Rat).